We begin with the raw amino-acid sequence, 107 residues long: MITLTESAKSAVTRFISSTGKPIAGLRIRVEGGGCSGLKYSLKLEEAGAEDDQLVDCDGITLLIDSASAPLLDGVTMDFVESMEGSGFTFVNPNATNSCGCGKSFAC.

It belongs to the HesB/IscA family.

This is an uncharacterized protein from Azotobacter vinelandii.